A 465-amino-acid chain; its full sequence is ATP synthase subunit beta (465 aa).

152–159 serves as a coordination point for ATP; it reads GGAGVGKT.

It belongs to the ATPase alpha/beta chains family. F-type ATPases have 2 components, CF(1) - the catalytic core - and CF(0) - the membrane proton channel. CF(1) has five subunits: alpha(3), beta(3), gamma(1), delta(1), epsilon(1). CF(0) has three main subunits: a(1), b(2) and c(9-12). The alpha and beta chains form an alternating ring which encloses part of the gamma chain. CF(1) is attached to CF(0) by a central stalk formed by the gamma and epsilon chains, while a peripheral stalk is formed by the delta and b chains.

The protein localises to the cell membrane. The catalysed reaction is ATP + H2O + 4 H(+)(in) = ADP + phosphate + 5 H(+)(out). Functionally, produces ATP from ADP in the presence of a proton gradient across the membrane. The catalytic sites are hosted primarily by the beta subunits. The protein is ATP synthase subunit beta of Ruminiclostridium cellulolyticum (strain ATCC 35319 / DSM 5812 / JCM 6584 / H10) (Clostridium cellulolyticum).